Consider the following 298-residue polypeptide: Protein RKD2 (298 aa).

Basic and acidic residues-rich tracts occupy residues 1-10 and 81-102; these read MADHTTKEQK and EQNR…VKET. Disordered stretches follow at residues 1–22 and 73–112; these read MADH…PSFD and SSAS…NERH. One can recognise an RWP-RK domain in the interval 121–203; it reads SDITTYTTSS…KMEGEENAEK (83 aa). Positions 188–222 form a coiled coil; it reads NVKELQKMEGEENAEKLQDALEMLEKEKRTIEDLP. Residues 241–279 form a disordered region; it reads NHKRKKKRSLKSDQSQVPSCSSSGSVPSDESVDEAGMES. The span at 252–269 shows a compositional bias: low complexity; sequence SDQSQVPSCSSSGSVPSD. Over residues 270–279 the composition is skewed to acidic residues; the sequence is ESVDEAGMES.

It is found in the nucleus. In terms of biological role, putative transcription factor. The chain is Protein RKD2 (RKD2) from Arabidopsis thaliana (Mouse-ear cress).